We begin with the raw amino-acid sequence, 226 residues long: 7-cyano-7-deazaguanine synthase (226 aa).

8 to 18 contributes to the ATP binding site; the sequence is LSGGLDSTTVL. 4 residues coordinate Zn(2+): Cys-190, Cys-198, Cys-201, and Cys-204.

It belongs to the QueC family. Homodimer. It depends on Zn(2+) as a cofactor.

The enzyme catalyses 7-carboxy-7-deazaguanine + NH4(+) + ATP = 7-cyano-7-deazaguanine + ADP + phosphate + H2O + H(+). It functions in the pathway purine metabolism; 7-cyano-7-deazaguanine biosynthesis. Its function is as follows. Catalyzes the ATP-dependent conversion of 7-carboxy-7-deazaguanine (CDG) to 7-cyano-7-deazaguanine (preQ(0)). The protein is 7-cyano-7-deazaguanine synthase of Clostridium kluyveri (strain ATCC 8527 / DSM 555 / NBRC 12016 / NCIMB 10680 / K1).